A 163-amino-acid chain; its full sequence is Deoxyuridine 5'-triphosphate nucleotidohydrolase (163 aa).

Substrate-binding positions include 78-80 (RSG), Asn91, and 95-97 (TVD). A compositionally biased stretch (basic and acidic residues) spans 140–151 (ERESLNETERGD). The segment at 140–163 (ERESLNETERGDGGFGHTGVNSQP) is disordered.

It belongs to the dUTPase family. Mg(2+) serves as cofactor.

The enzyme catalyses dUTP + H2O = dUMP + diphosphate + H(+). The protein operates within pyrimidine metabolism; dUMP biosynthesis; dUMP from dCTP (dUTP route): step 2/2. Its function is as follows. This enzyme is involved in nucleotide metabolism: it produces dUMP, the immediate precursor of thymidine nucleotides and it decreases the intracellular concentration of dUTP so that uracil cannot be incorporated into DNA. The chain is Deoxyuridine 5'-triphosphate nucleotidohydrolase from Heliobacterium modesticaldum (strain ATCC 51547 / Ice1).